Consider the following 210-residue polypeptide: N-(5'-phosphoribosyl)anthranilate isomerase (210 aa).

It belongs to the TrpF family.

It catalyses the reaction N-(5-phospho-beta-D-ribosyl)anthranilate = 1-(2-carboxyphenylamino)-1-deoxy-D-ribulose 5-phosphate. Its pathway is amino-acid biosynthesis; L-tryptophan biosynthesis; L-tryptophan from chorismate: step 3/5. The chain is N-(5'-phosphoribosyl)anthranilate isomerase from Staphylococcus aureus (strain Mu3 / ATCC 700698).